Reading from the N-terminus, the 288-residue chain is Acetyl-coenzyme A carboxylase carboxyl transferase subunit beta (288 aa).

Residues I30–A288 enclose the CoA carboxyltransferase N-terminal domain. Zn(2+) is bound by residues C34, C37, C53, and C56. Residues C34 to C56 form a C4-type zinc finger.

It belongs to the AccD/PCCB family. In terms of assembly, acetyl-CoA carboxylase is a heterohexamer composed of biotin carboxyl carrier protein (AccB), biotin carboxylase (AccC) and two subunits each of ACCase subunit alpha (AccA) and ACCase subunit beta (AccD). The cofactor is Zn(2+).

It is found in the cytoplasm. It catalyses the reaction N(6)-carboxybiotinyl-L-lysyl-[protein] + acetyl-CoA = N(6)-biotinyl-L-lysyl-[protein] + malonyl-CoA. Its pathway is lipid metabolism; malonyl-CoA biosynthesis; malonyl-CoA from acetyl-CoA: step 1/1. Component of the acetyl coenzyme A carboxylase (ACC) complex. Biotin carboxylase (BC) catalyzes the carboxylation of biotin on its carrier protein (BCCP) and then the CO(2) group is transferred by the transcarboxylase to acetyl-CoA to form malonyl-CoA. The polypeptide is Acetyl-coenzyme A carboxylase carboxyl transferase subunit beta (Staphylococcus haemolyticus (strain JCSC1435)).